The chain runs to 260 residues: Ribosomal RNA small subunit methyltransferase J (260 aa).

S-adenosyl-L-methionine is bound by residues 125-126 (ER) and Asp-179.

Belongs to the methyltransferase superfamily. RsmJ family.

The protein resides in the cytoplasm. The catalysed reaction is guanosine(1516) in 16S rRNA + S-adenosyl-L-methionine = N(2)-methylguanosine(1516) in 16S rRNA + S-adenosyl-L-homocysteine + H(+). Functionally, specifically methylates the guanosine in position 1516 of 16S rRNA. This is Ribosomal RNA small subunit methyltransferase J from Pseudomonas fluorescens (strain ATCC BAA-477 / NRRL B-23932 / Pf-5).